The sequence spans 442 residues: Signal recognition particle 54 kDa protein (442 aa).

GTP is bound by residues 106–113 (GLQGSGKT), 186–190 (DTAGR), and 244–247 (TKLD).

The protein belongs to the GTP-binding SRP family. SRP54 subfamily. In terms of assembly, part of the signal recognition particle protein translocation system, which is composed of SRP and FtsY. Archaeal SRP consists of a 7S RNA molecule of 300 nucleotides and two protein subunits: SRP54 and SRP19.

The protein resides in the cytoplasm. The catalysed reaction is GTP + H2O = GDP + phosphate + H(+). In terms of biological role, involved in targeting and insertion of nascent membrane proteins into the cytoplasmic membrane. Binds to the hydrophobic signal sequence of the ribosome-nascent chain (RNC) as it emerges from the ribosomes. The SRP-RNC complex is then targeted to the cytoplasmic membrane where it interacts with the SRP receptor FtsY. The sequence is that of Signal recognition particle 54 kDa protein from Methanothermobacter thermautotrophicus (strain ATCC 29096 / DSM 1053 / JCM 10044 / NBRC 100330 / Delta H) (Methanobacterium thermoautotrophicum).